Reading from the N-terminus, the 354-residue chain is Protein RecA (354 aa).

68-75 lines the ATP pocket; the sequence is GPESSGKT.

It belongs to the RecA family.

The protein resides in the cytoplasm. Functionally, can catalyze the hydrolysis of ATP in the presence of single-stranded DNA, the ATP-dependent uptake of single-stranded DNA by duplex DNA, and the ATP-dependent hybridization of homologous single-stranded DNAs. It interacts with LexA causing its activation and leading to its autocatalytic cleavage. The protein is Protein RecA of Synechocystis sp. (strain ATCC 27184 / PCC 6803 / Kazusa).